Reading from the N-terminus, the 748-residue chain is Translation factor GUF1 homolog 1, mitochondrial (748 aa).

Residues 1–29 (MRVGCCLLLKPIRQRLCTASISSRHIMRW) constitute a mitochondrion transit peptide. The region spanning 94–276 (SHIRNFAVVA…AIIERVPPPT (183 aa)) is the tr-type G domain. GTP is bound by residues 103–110 (AHVDHGKT), 167–171 (DTPGH), and 221–224 (TKMD).

It belongs to the TRAFAC class translation factor GTPase superfamily. Classic translation factor GTPase family. LepA subfamily.

It localises to the mitochondrion inner membrane. It carries out the reaction GTP + H2O = GDP + phosphate + H(+). Promotes mitochondrial protein synthesis. May act as a fidelity factor of the translation reaction, by catalyzing a one-codon backward translocation of tRNAs on improperly translocated ribosomes. Binds to mitochondrial ribosomes in a GTP-dependent manner. In Trypanosoma cruzi (strain CL Brener), this protein is Translation factor GUF1 homolog 1, mitochondrial.